A 79-amino-acid chain; its full sequence is Conotoxin LiCr173 (79 aa).

A signal peptide spans 1–20; the sequence is MSGLGTMVLTLLLLVFMVTS. Residues 21-46 constitute a propeptide that is removed on maturation; the sequence is HQDGGKKQATQRNAVNIRRRKSITQR. Cystine bridges form between Cys52–Cys64, Cys56–Cys73, and Cys63–Cys77. The residue at position 78 (Phe78) is a Phenylalanine amide.

The protein belongs to the conotoxin O3 superfamily. As to expression, expressed by the venom duct.

The protein localises to the secreted. This chain is Conotoxin LiCr173, found in Conus lividus (Livid cone).